The primary structure comprises 63 residues: UPF0434 protein Sde_1297 (63 aa).

Belongs to the UPF0434 family.

This chain is UPF0434 protein Sde_1297, found in Saccharophagus degradans (strain 2-40 / ATCC 43961 / DSM 17024).